We begin with the raw amino-acid sequence, 37 residues long: M-oxotoxin-Ot2d (37 aa).

As to expression, expressed by the venom gland.

It is found in the secreted. Disrupts biological membranes, particularly those rich in phosphocholine. Has antimicrobial activity against Gram-negative bacterium E.coli, Gram-positive bacteria B.subtilis and S.aureus, and hemolytic activity against sheep, pig and guinea pig red blood cells. Has insecticidal activity against S.frugiperda ovarian cells by opening non-selective ion channels. Enhances the insecticidal activity of spider venom neurotoxic peptides. The sequence is that of M-oxotoxin-Ot2d from Oxyopes takobius (Lynx spider).